A 366-amino-acid polypeptide reads, in one-letter code: Transcription initiation factor IIA subunit 1 (366 aa).

3 disordered regions span residues 56 to 82 (LSPDSGDGSHPPPIVANNPKSHKAANA), 133 to 162 (EVNSQNPPPLHPTSAASMMQKQQQAASSGQ), and 257 to 317 (QLDG…DSAE). Over residues 146–162 (SAASMMQKQQQAASSGQ) the composition is skewed to low complexity. Positions 264–317 (SSDEDESEESDDNIDNDDDDDLDKDDDEDAEHEDAAEEEPLNSEDDVTDEDSAE) are enriched in acidic residues. A phosphoserine; by TAF1 mark is found at serine 265 and serine 306.

This sequence belongs to the TFIIA subunit 1 family. Belongs to the TFIID complex which is composed of TATA binding protein (Tbp) and a number of TBP-associated factors (Tafs). TFIIA is a heterodimer of a unprocessed large subunit 1 and a small subunit gamma. It was originally believed to be a heterotrimer of an alpha (p30), a beta (p20) and a gamma subunit (p14). Interacts with Tbp. Taf4 interacts with TFIIA-L when TFIIA-L is in complex with Tbp. In terms of processing, the precursor form (48 kDa) is cleaved to give rise to the alpha (30 kDa) and beta (20 kDa) subunits.

Its subcellular location is the nucleus. Functionally, TFIIA is a component of the transcription machinery of RNA polymerase II and plays an important role in transcriptional activation. TFIIA in a complex with TBP mediates transcriptional activity. The sequence is that of Transcription initiation factor IIA subunit 1 (TfIIA-L) from Drosophila melanogaster (Fruit fly).